The primary structure comprises 230 residues: Secretory carrier-associated membrane protein 4 (230 aa).

Residues 1–39 (MAGKENNFPPLPPFLPLKPCFYQDFSDEIPVEHQVLVKR) lie on the Cytoplasmic side of the membrane. Transmembrane regions (helical) follow at residues 40 to 60 (IYRLWMFYCATLGVNLVACLA), 61 to 81 (WWIAGGAGANFGLALLWLVLF), 106 to 126 (MTFFFIFGAQFVLTVIQAIGF), and 149 to 169 (VVMLVPAILFSLSALVMAVTI). The Cytoplasmic portion of the chain corresponds to 170-230 (VKVHRIYRGA…SYSSSGGHWP (61 aa)). Phosphothreonine is present on Thr-194.

This sequence belongs to the SCAMP family.

It localises to the membrane. In terms of biological role, probably involved in membrane protein trafficking. The chain is Secretory carrier-associated membrane protein 4 (Scamp4) from Mus musculus (Mouse).